Reading from the N-terminus, the 414-residue chain is Glutamyl-tRNA reductase (414 aa).

Residues 48–51, Ser-104, 109–111, and Gln-115 contribute to the substrate site; these read TCNR and EAQ. Cys-49 acts as the Nucleophile in catalysis. 184–189 provides a ligand contact to NADP(+); that stretch reads GAGEMI.

The protein belongs to the glutamyl-tRNA reductase family. In terms of assembly, homodimer.

The catalysed reaction is (S)-4-amino-5-oxopentanoate + tRNA(Glu) + NADP(+) = L-glutamyl-tRNA(Glu) + NADPH + H(+). It participates in porphyrin-containing compound metabolism; protoporphyrin-IX biosynthesis; 5-aminolevulinate from L-glutamyl-tRNA(Glu): step 1/2. In terms of biological role, catalyzes the NADPH-dependent reduction of glutamyl-tRNA(Glu) to glutamate 1-semialdehyde (GSA). This is Glutamyl-tRNA reductase from Methylobacillus flagellatus (strain ATCC 51484 / DSM 6875 / VKM B-1610 / KT).